The sequence spans 346 residues: tRNA N6-adenosine threonylcarbamoyltransferase (346 aa).

A divalent metal cation is bound by residues histidine 117, histidine 121, and tyrosine 138. Residues 138-142 (YVSGG), aspartate 170, glycine 185, and asparagine 277 each bind substrate. An a divalent metal cation-binding site is contributed by aspartate 305.

The protein belongs to the KAE1 / TsaD family. In terms of assembly, component of the EKC/KEOPS complex composed of at least SPAP27G11.07c/BUD32, cgi121, gon7, pgp2 and SPAC4H3.13/PCC1; the whole complex dimerizes. The cofactor is a divalent metal cation.

It is found in the cytoplasm. Its subcellular location is the nucleus. The enzyme catalyses L-threonylcarbamoyladenylate + adenosine(37) in tRNA = N(6)-L-threonylcarbamoyladenosine(37) in tRNA + AMP + H(+). Functionally, component of the EKC/KEOPS complex that is required for the formation of a threonylcarbamoyl group on adenosine at position 37 (t(6)A37) in tRNAs that read codons beginning with adenine. The complex is probably involved in the transfer of the threonylcarbamoyl moiety of threonylcarbamoyl-AMP (TC-AMP) to the N6 group of A37. Pgp2 likely plays a direct catalytic role in this reaction, but requires other protein(s) of the complex to fulfill this activity. The EKC/KEOPS complex also promotes both telomere uncapping and telomere elongation. The complex is required for efficient recruitment of transcriptional coactivators. This chain is tRNA N6-adenosine threonylcarbamoyltransferase (pgp2), found in Schizosaccharomyces pombe (strain 972 / ATCC 24843) (Fission yeast).